Consider the following 135-residue polypeptide: Sex-regulated protein janus-A (135 aa).

Lysine 37 lines the substrate pocket. Histidine 63 functions as the Proton acceptor in the catalytic mechanism. 104-106 (SQG) contacts substrate.

The protein belongs to the janus family.

Its function is as follows. JanA and janB regulate somatic sex differentiation. The chain is Sex-regulated protein janus-A (janA) from Drosophila erecta (Fruit fly).